Reading from the N-terminus, the 470-residue chain is Cysteine--tRNA ligase (470 aa).

Cys27 is a Zn(2+) binding site. The short motif at 29–39 is the 'HIGH' region element; the sequence is PTVYNFFHIGN. Residues Cys211, His236, and Glu240 each contribute to the Zn(2+) site. Positions 268–272 match the 'KMSKS' region motif; it reads KMSKS. Lys271 is an ATP binding site.

It belongs to the class-I aminoacyl-tRNA synthetase family. Monomer. Zn(2+) serves as cofactor.

Its subcellular location is the cytoplasm. It carries out the reaction tRNA(Cys) + L-cysteine + ATP = L-cysteinyl-tRNA(Cys) + AMP + diphosphate. In Clostridium botulinum (strain Alaska E43 / Type E3), this protein is Cysteine--tRNA ligase.